We begin with the raw amino-acid sequence, 114 residues long: Large ribosomal subunit protein uL22 (114 aa).

Belongs to the universal ribosomal protein uL22 family. In terms of assembly, part of the 50S ribosomal subunit.

This protein binds specifically to 23S rRNA; its binding is stimulated by other ribosomal proteins, e.g. L4, L17, and L20. It is important during the early stages of 50S assembly. It makes multiple contacts with different domains of the 23S rRNA in the assembled 50S subunit and ribosome. In terms of biological role, the globular domain of the protein is located near the polypeptide exit tunnel on the outside of the subunit, while an extended beta-hairpin is found that lines the wall of the exit tunnel in the center of the 70S ribosome. The sequence is that of Large ribosomal subunit protein uL22 from Desulfitobacterium hafniense (strain Y51).